The following is a 377-amino-acid chain: MPQLAPEGQLATQQIGDIRTEAGALIPDVTIAYHRWGEYEENADGSTNVVLIEHALTGDSNAADWWCDLVGPGKAIDTDLYCVICTNVLGGCNGSTGPSSQHPDGGFWGSRFPATDIRDQVKAEKQFLDAIGITRVKAVLGGSMGGARTLEWAAMFPDVVDAAAVLAVSARASAWQIGIQSAQIMAIENDHHWHEGNYYESGCNPSKGLGAARRIAHLTYRGELEIDERFGTQPQKGENPLGPYRRPDQRFAVESYLDHQADKLVKRFDAGSYVTLTDALNRHDIGRGRGGLNKALESITIPVMVAGVDTDILYPYHQQEHLSRNLGNLLAMAKIVSPVGHDAFLTESRQMDRILRNFFSLISPDEDNPSTYIEFFI.

Residues 48 to 347 (NVVLIEHALT…PVGHDAFLTE (300 aa)) enclose the AB hydrolase-1 domain. Residue serine 143 is the Nucleophile of the active site. Residue arginine 213 coordinates substrate. Catalysis depends on residues aspartate 311 and histidine 341. Aspartate 342 is a substrate binding site.

Belongs to the AB hydrolase superfamily. MetX family. Homodimer.

Its subcellular location is the cytoplasm. It carries out the reaction L-homoserine + acetyl-CoA = O-acetyl-L-homoserine + CoA. It participates in amino-acid biosynthesis; L-methionine biosynthesis via de novo pathway; O-acetyl-L-homoserine from L-homoserine: step 1/1. Its function is as follows. Transfers an acetyl group from acetyl-CoA to L-homoserine, forming acetyl-L-homoserine. This Corynebacterium efficiens (strain DSM 44549 / YS-314 / AJ 12310 / JCM 11189 / NBRC 100395) protein is Homoserine O-acetyltransferase.